Here is a 141-residue protein sequence, read N- to C-terminus: HTH-type transcriptional repressor NsrR (141 aa).

One can recognise an HTH rrf2-type domain in the interval 2 to 129 (QLTSFTDYAL…DDCTIEELLS (128 aa)). Residues 28 to 51 (ITEVTDLFGVSRNHMVKVINRLGQ) constitute a DNA-binding region (H-T-H motif). Residues C91, C96, and C102 each coordinate [2Fe-2S] cluster.

The cofactor is [2Fe-2S] cluster.

Nitric oxide-sensitive repressor of genes involved in protecting the cell against nitrosative stress. May require iron for activity. The sequence is that of HTH-type transcriptional repressor NsrR from Vibrio campbellii (strain ATCC BAA-1116).